Reading from the N-terminus, the 269-residue chain is Small ribosomal subunit protein uS3m (269 aa).

Belongs to the universal ribosomal protein uS3 family.

The protein localises to the mitochondrion. Functionally, essential for mitochondrial protein synthesis and required for the maturation of small ribosomal subunits. The chain is Small ribosomal subunit protein uS3m (VAR1) from Monosporozyma servazzii (Yeast).